Consider the following 333-residue polypeptide: MTDSASGASAVANIATPSNEPYDATRKQKSLDKTARIPIKIVPAEKLKKPEWIRVKAATGNSRFYEIKDILRANNLVTVCEEASCPNIGECFGKGTATFMIMGDKCTRRCPFCDVGHGRPDPLDANEPENLAKTIAQLRLNYVVITSVDRDDLRDGGAQHYVDCISRTRELSPATRIEVLVPDFRGRLEKALDILQACPPDVMNHNMETVPRLYKQARPGADYAHSLKLLKDFKARNPNLPTKSGLMVGLGETDEEILEVMRDMREHDIDMLTIGQYLAPSGHHLPVLRYVHPDTFKMFEEKAYEMGFTHAAVGAMVRSSYHADQQAHEAGFA.

The interval Met1 to Lys29 is disordered. The [4Fe-4S] cluster site is built by Cys80, Cys85, Cys91, Cys106, Cys110, Cys113, and Ser320. A Radical SAM core domain is found at Cys91–Thr309.

This sequence belongs to the radical SAM superfamily. Lipoyl synthase family. Requires [4Fe-4S] cluster as cofactor.

The protein localises to the cytoplasm. The enzyme catalyses [[Fe-S] cluster scaffold protein carrying a second [4Fe-4S](2+) cluster] + N(6)-octanoyl-L-lysyl-[protein] + 2 oxidized [2Fe-2S]-[ferredoxin] + 2 S-adenosyl-L-methionine + 4 H(+) = [[Fe-S] cluster scaffold protein] + N(6)-[(R)-dihydrolipoyl]-L-lysyl-[protein] + 4 Fe(3+) + 2 hydrogen sulfide + 2 5'-deoxyadenosine + 2 L-methionine + 2 reduced [2Fe-2S]-[ferredoxin]. The protein operates within protein modification; protein lipoylation via endogenous pathway; protein N(6)-(lipoyl)lysine from octanoyl-[acyl-carrier-protein]: step 2/2. Its function is as follows. Catalyzes the radical-mediated insertion of two sulfur atoms into the C-6 and C-8 positions of the octanoyl moiety bound to the lipoyl domains of lipoate-dependent enzymes, thereby converting the octanoylated domains into lipoylated derivatives. In Ralstonia nicotianae (strain ATCC BAA-1114 / GMI1000) (Ralstonia solanacearum), this protein is Lipoyl synthase.